The sequence spans 142 residues: Hemoglobin subunit alpha (142 aa).

The region spanning 2–142 (VLSSADKNNV…VSTVLTSKYR (141 aa)) is the Globin domain. The residue at position 4 (Ser4) is a Phosphoserine. An N6-succinyllysine mark is found at Lys8 and Lys12. An N6-acetyllysine; alternate modification is found at Lys17. Residue Lys17 is modified to N6-succinyllysine; alternate. Tyr25 is subject to Phosphotyrosine. Phosphoserine is present on Ser36. Lys41 is modified (N6-succinyllysine). Ser50 is subject to Phosphoserine. His59 lines the O2 pocket. His88 lines the heme b pocket. Ser103 is subject to Phosphoserine. At Thr109 the chain carries Phosphothreonine. The residue at position 125 (Ser125) is a Phosphoserine. A phosphothreonine mark is found at Thr135 and Thr138. At Ser139 the chain carries Phosphoserine.

Belongs to the globin family. As to quaternary structure, heterotetramer of two alpha chains and two beta chains. Red blood cells.

Its function is as follows. Involved in oxygen transport from the lung to the various peripheral tissues. Functionally, hemopressin acts as an antagonist peptide of the cannabinoid receptor CNR1. Hemopressin-binding efficiently blocks cannabinoid receptor CNR1 and subsequent signaling. This chain is Hemoglobin subunit alpha (HBA), found in Panthera leo (Lion).